The sequence spans 544 residues: Chaperonin GroEL (544 aa).

Residues 29-32 (TLGP), 86-90 (DGTTT), Gly413, 476-478 (NAA), and Asp492 contribute to the ATP site.

This sequence belongs to the chaperonin (HSP60) family. Forms a cylinder of 14 subunits composed of two heptameric rings stacked back-to-back. Interacts with the co-chaperonin GroES.

It localises to the cytoplasm. The catalysed reaction is ATP + H2O + a folded polypeptide = ADP + phosphate + an unfolded polypeptide.. Functionally, together with its co-chaperonin GroES, plays an essential role in assisting protein folding. The GroEL-GroES system forms a nano-cage that allows encapsulation of the non-native substrate proteins and provides a physical environment optimized to promote and accelerate protein folding. This is Chaperonin GroEL from Bacillus mycoides (strain KBAB4) (Bacillus weihenstephanensis).